Consider the following 79-residue polypeptide: Acyl carrier protein (79 aa).

The Carrier domain maps to 2–77; the sequence is DNIEQRVKKI…QAIDYATAHV (76 aa). Ser-37 carries the post-translational modification O-(pantetheine 4'-phosphoryl)serine.

It belongs to the acyl carrier protein (ACP) family. 4'-phosphopantetheine is transferred from CoA to a specific serine of apo-ACP by AcpS. This modification is essential for activity because fatty acids are bound in thioester linkage to the sulfhydryl of the prosthetic group.

Its subcellular location is the cytoplasm. It participates in lipid metabolism; fatty acid biosynthesis. Carrier of the growing fatty acid chain in fatty acid biosynthesis. The protein is Acyl carrier protein of Cupriavidus pinatubonensis (strain JMP 134 / LMG 1197) (Cupriavidus necator (strain JMP 134)).